Consider the following 557-residue polypeptide: Carboxypeptidase Y homolog A (557 aa).

The N-terminal stretch at 1 to 17 is a signal peptide; it reads MRVLPAAMLVGAATAAV. Positions 18-138 are excised as a propeptide; sequence PPFQQVLGGN…KLEAYDLRVK (121 aa). 5 disulfides stabilise this stretch: Cys193-Cys433, Cys327-Cys341, Cys351-Cys374, Cys358-Cys367, and Cys396-Cys403. N-linked (GlcNAc...) asparagine glycosylation is present at Asn224. The active site involves Ser280. Asp472 is an active-site residue. The N-linked (GlcNAc...) asparagine glycan is linked to Asn523. His534 is an active-site residue.

This sequence belongs to the peptidase S10 family.

Its subcellular location is the vacuole. It catalyses the reaction Release of a C-terminal amino acid with broad specificity.. Vacuolar carboxypeptidase involved in degradation of small peptides. Digests preferentially peptides containing an aliphatic or hydrophobic residue in P1' position, as well as methionine, leucine or phenylalanine in P1 position of ester substrate. The chain is Carboxypeptidase Y homolog A (cpyA) from Aspergillus niger (strain ATCC MYA-4892 / CBS 513.88 / FGSC A1513).